Consider the following 180-residue polypeptide: Large ribosomal subunit protein uL5c (180 aa).

The protein belongs to the universal ribosomal protein uL5 family. Part of the 50S ribosomal subunit; contacts the 5S rRNA.

The protein resides in the plastid. It is found in the chloroplast. Functionally, binds 5S rRNA, forms part of the central protuberance of the 50S subunit. The sequence is that of Large ribosomal subunit protein uL5c (rpl5) from Oltmannsiellopsis viridis (Marine flagellate).